The sequence spans 83 residues: Apolipoprotein C-I, acidic form (83 aa).

An N-terminal signal peptide occupies residues 1-26 (MRLFLSLPVLVVVLSMVLEGPAPAQG).

This sequence belongs to the apolipoprotein C1 family.

Its subcellular location is the secreted. Inhibitor of lipoprotein binding to the low density lipoprotein (LDL) receptor, LDL receptor-related protein, and very low density lipoprotein (VLDL) receptor. Associates with high density lipoproteins (HDL) and the triacylglycerol-rich lipoproteins in the plasma and makes up about 10% of the protein of the VLDL and 2% of that of HDL. Appears to interfere directly with fatty acid uptake and is also the major plasma inhibitor of cholesteryl ester transfer protein (CETP). Binds free fatty acids and reduces their intracellular esterification. Modulates the interaction of APOE with beta-migrating VLDL and inhibits binding of beta-VLDL to the LDL receptor-related protein. This is Apolipoprotein C-I, acidic form (APOC1A) from Pongo abelii (Sumatran orangutan).